Reading from the N-terminus, the 537-residue chain is O-phosphoserine--tRNA(Cys) ligase (537 aa).

Substrate contacts are provided by residues His186–Thr188, Ser231–Ser233, Tyr273–Tyr274, and Asn317.

This sequence belongs to the class-II aminoacyl-tRNA synthetase family. O-phosphoseryl-tRNA(Cys) synthetase subfamily. In terms of assembly, homotetramer. Interacts with SepCysS.

The enzyme catalyses tRNA(Cys) + O-phospho-L-serine + ATP = O-phospho-L-seryl-tRNA(Cys) + AMP + diphosphate. Its function is as follows. Catalyzes the attachment of O-phosphoserine (Sep) to tRNA(Cys). This chain is O-phosphoserine--tRNA(Cys) ligase, found in Methanococcus maripaludis (strain C7 / ATCC BAA-1331).